A 279-amino-acid polypeptide reads, in one-letter code: Ribosomal RNA small subunit methyltransferase J (279 aa).

Residues 138-139 and Asp194 contribute to the S-adenosyl-L-methionine site; that span reads ER.

Belongs to the methyltransferase superfamily. RsmJ family.

Its subcellular location is the cytoplasm. It catalyses the reaction guanosine(1516) in 16S rRNA + S-adenosyl-L-methionine = N(2)-methylguanosine(1516) in 16S rRNA + S-adenosyl-L-homocysteine + H(+). In terms of biological role, specifically methylates the guanosine in position 1516 of 16S rRNA. The sequence is that of Ribosomal RNA small subunit methyltransferase J from Acinetobacter baumannii (strain ACICU).